A 387-amino-acid chain; its full sequence is [LysW]-aminoadipate semialdehyde/glutamate semialdehyde transaminase (387 aa).

Pyridoxal 5'-phosphate contacts are provided by residues 96–97 and phenylalanine 123; that span reads GT. Position 126 (arginine 126) interacts with substrate. 207 to 210 serves as a coordination point for pyridoxal 5'-phosphate; sequence DEVQ. Lysine 236 bears the N6-(pyridoxal phosphate)lysine mark. Serine 264 is a substrate binding site. Threonine 265 contributes to the pyridoxal 5'-phosphate binding site.

The protein belongs to the class-III pyridoxal-phosphate-dependent aminotransferase family. LysJ subfamily. Homodimer. Pyridoxal 5'-phosphate serves as cofactor.

The protein resides in the cytoplasm. The enzyme catalyses [amino-group carrier protein]-C-terminal-gamma-(L-lysyl)-L-glutamate + 2-oxoglutarate = [amino-group carrier protein]-C-terminal-N-(1-carboxy-5-oxopentan-1-yl)-L-glutamine + L-glutamate. The catalysed reaction is [amino-group carrier protein]-C-terminal-gamma-(L-ornithyl)-L-glutamate + 2-oxoglutarate = [amino-group carrier protein]-C-terminal-gamma-(L-glutamyl-5-semialdehyde)-L-glutamate + L-glutamate. The protein operates within amino-acid biosynthesis; L-lysine biosynthesis via AAA pathway; L-lysine from L-alpha-aminoadipate (Thermus route): step 4/5. Its pathway is amino-acid biosynthesis; L-arginine biosynthesis. Involved in both the arginine and lysine biosynthetic pathways. The protein is [LysW]-aminoadipate semialdehyde/glutamate semialdehyde transaminase of Sulfurisphaera tokodaii (strain DSM 16993 / JCM 10545 / NBRC 100140 / 7) (Sulfolobus tokodaii).